The chain runs to 315 residues: Iron(3+)-hydroxamate-binding protein FhuD (315 aa).

An N-terminal signal peptide occupies residues 1–23; that stretch reads MTHIYKKLGAAFFALLLIAALAA. The N-palmitoyl cysteine moiety is linked to residue Cys24. Cys24 carries the S-diacylglycerol cysteine lipid modification. One can recognise a Fe/B12 periplasmic-binding domain in the interval 60–315; that stretch reads RVVVMADGYY…LEFITESLTK (256 aa).

This sequence belongs to the bacterial solute-binding protein 8 family. As to quaternary structure, the complex is composed of an ATP-binding protein (FhuC), two transmembrane proteins (FhuB and FhuG) and a solute-binding protein (FhuD or YxeB).

It is found in the cell membrane. Its subcellular location is the membrane raft. Part of the ABC transporter complex FhuCBGD involved in iron(3+)-hydroxamate import. Binds the iron(3+)-hydroxamate complex and transfers it to the membrane-bound permease. Required for the transport of ferrichrome and coprogen. In Bacillus subtilis (strain 168), this protein is Iron(3+)-hydroxamate-binding protein FhuD (fhuD).